Consider the following 1306-residue polypeptide: Contactin-associated protein-like 5 (1306 aa).

The signal sequence occupies residues 1–24 (MDSLPRLTSVLTLLFSGLWHLGLT). Over 25 to 1237 (ATNYNCDDPL…PLTNAVRSDS (1213 aa)) the chain is Extracellular. Residues 30–174 (CDDPLASLLS…IGMRVEVYGC (145 aa)) form the F5/8 type C domain. Cys30 and Cys174 form a disulfide bridge. 2 consecutive Laminin G-like domains span residues 180 to 360 (VADF…TFSC) and 367 to 544 (PITF…IDLC). N-linked (GlcNAc...) asparagine glycans are attached at residues Asn282, Asn355, and Asn496. Cysteines 329 and 360 form a disulfide. 3 cysteine pairs are disulfide-bonded: Cys512–Cys544, Cys550–Cys561, and Cys555–Cys570. An EGF-like 1 domain is found at 546 to 583 (IKDRCLPNYCEHGGSCSQSWTTFYCNCSDTSYTGATCH). Asn571 carries an N-linked (GlcNAc...) asparagine glycan. A disulfide bond links Cys572 and Cys582. In terms of domain architecture, Fibrinogen C-terminal spans 584 to 790 (NSIYEQSCEV…LRCYGDRRFW (207 aa)). Asn622 is a glycosylation site (N-linked (GlcNAc...) asparagine). A Laminin G-like 3 domain is found at 791–956 (NAVSFYTEAS…KVTSGVRPGC (166 aa)). Cystine bridges form between Cys929-Cys956, Cys960-Cys973, Cys967-Cys982, Cys984-Cys994, and Cys1164-Cys1199. Positions 957 to 995 (PGHCSSYGSICHNGGKCVEKHNGYLCDCTNSPYEGPFCK) constitute an EGF-like 2 domain. One can recognise a Laminin G-like 4 domain in the interval 1013-1199 (QEPYPVTKNI…VHGTLTESSC (187 aa)). Residues 1238 to 1258 (AVIGGVIAVVIFIIFCIIGIM) traverse the membrane as a helical segment. Topologically, residues 1259 to 1306 (TRFLYQHKQSHRTSQMKEKEYPENLDSSFRNEIDLQNTVSECKREYFI) are cytoplasmic.

It belongs to the neurexin family.

The protein localises to the membrane. Functionally, may play a role in the correct development and proper functioning of the peripheral and central nervous system and be involved in cell adhesion and intercellular communication. This chain is Contactin-associated protein-like 5 (CNTNAP5), found in Homo sapiens (Human).